The sequence spans 248 residues: Small ribosomal subunit protein uS2 (248 aa).

This sequence belongs to the universal ribosomal protein uS2 family.

This is Small ribosomal subunit protein uS2 from Cupriavidus necator (strain ATCC 17699 / DSM 428 / KCTC 22496 / NCIMB 10442 / H16 / Stanier 337) (Ralstonia eutropha).